A 481-amino-acid chain; its full sequence is Hyaluronidase-4 (481 aa).

The Cytoplasmic segment spans residues 1-8; sequence MKVLSEGQ. Residues 9-29 traverse the membrane as a helical segment; sequence LKLCVVQPVHLTSWLLIFFIL. The Extracellular portion of the chain corresponds to 30 to 453; the sequence is KSISCLKPAR…ADCREIKTAD (424 aa). 5 disulfide bridges follow: Cys59-Cys351, Cys223-Cys237, Cys376-Cys387, Cys381-Cys435, and Cys437-Cys446. Residues Asn86 and Asn115 are each glycosylated (N-linked (GlcNAc...) asparagine). Catalysis depends on Glu147, which acts as the Proton donor. Asn177 is a glycosylation site (N-linked (GlcNAc...) (complex) asparagine). N-linked (GlcNAc...) asparagine glycosylation occurs at Asn343. The helical transmembrane segment at 454–474 threads the bilayer; the sequence is GCSGVSPSPGSLMTLCLLLLA. Over 475-481 the chain is Cytoplasmic; that stretch reads SYRSIQL.

The protein belongs to the glycosyl hydrolase 56 family. Detected in placenta and skeletal muscle.

It is found in the membrane. The enzyme catalyses Random hydrolysis of (1-&gt;4)-linkages between N-acetyl-beta-D-glucosamine and D-glucuronate residues in hyaluronate.. Endo-hyaluronidase that degrades hyaluronan to smaller oligosaccharide fragments. Also has chondroitin sulfate hydrolase activity, The best substrate being the galactosaminidic linkage in the sequence of a trisulfated tetrasaccharide. This is Hyaluronidase-4 (HYAL4) from Homo sapiens (Human).